The following is a 198-amino-acid chain: Nucleoid occlusion factor SlmA (198 aa).

Residues 9-70 enclose the HTH tetR-type domain; that stretch reads RNRREEILQA…SLIEFIEDSL (62 aa). A DNA-binding region (H-T-H motif) is located at residues 33 to 52; it reads TTAKLAANVGVSEAALYRHF. Residues 119–144 are a coiled coil; that stretch reads DRLQGRINQLFERIEVQLRQVLREKK.

This sequence belongs to the nucleoid occlusion factor SlmA family. Homodimer. Interacts with FtsZ.

The protein localises to the cytoplasm. Its subcellular location is the nucleoid. Required for nucleoid occlusion (NO) phenomenon, which prevents Z-ring formation and cell division over the nucleoid. Acts as a DNA-associated cell division inhibitor that binds simultaneously chromosomal DNA and FtsZ, and disrupts the assembly of FtsZ polymers. SlmA-DNA-binding sequences (SBS) are dispersed on non-Ter regions of the chromosome, preventing FtsZ polymerization at these regions. This is Nucleoid occlusion factor SlmA from Yersinia enterocolitica serotype O:8 / biotype 1B (strain NCTC 13174 / 8081).